A 3332-amino-acid polypeptide reads, in one-letter code: Nonribosomal peptide synthetase imqB (3332 aa).

An adenylation 1 region spans residues 230–622 (FSEQVKAHPG…IGRKDTQVKV (393 aa)). The 83-residue stretch at 764–846 (GRITPQEKLL…DMARCITRVD (83 aa)) folds into the Carrier 1 domain. The residue at position 801 (S801) is an O-(pantetheine 4'-phosphoryl)serine. The tract at residues 886-1314 (DIYPCTPLQE…NCLTRKELHQ (429 aa)) is condensation 1. The segment at 1336–1740 (EVSNTRPTAP…GRKDRQLKVR (405 aa)) is adenylation 2. The region spanning 1880 to 1954 (AIATPKEEKL…EMAEKAAETG (75 aa)) is the Carrier 2 domain. S1915 bears the O-(pantetheine 4'-phosphoryl)serine mark. The tract at residues 1992–2402 (EDIYPCTPLQ…CLSEIDTQQI (411 aa)) is condensation 2. Residues 2422–2819 (AQQAREHPAT…GRKDTQVKIR (398 aa)) form an adenylation 3 region. The 77-residue stretch at 2963 to 3039 (EVATNDEAAV…DLASRIGRVE (77 aa)) folds into the Carrier 3 domain. The residue at position 3000 (S3000) is an O-(pantetheine 4'-phosphoryl)serine. The interval 3058-3323 (SSNPTLIQGQ…ETTRHIRDFC (266 aa)) is thioesterase (TE) domain.

The protein belongs to the NRP synthetase family.

The protein operates within secondary metabolite biosynthesis. Functionally, nonribosomal peptide synthetase; part of the gene cluster that mediates the biosynthesis of imizoquins A to D, tripeptide-derived alkaloids that serve a protective role against oxidative stress that are essential for normal germination. ImqB is a canonical three-module NRPS that assembles the tripeptide backbone of the imizoquins via condensation of Trp, Tyr, and Leu-derived precursors. N-methylation by imqF and phenol oxidation by imqC, followed by cyclization via the FAD-dependent oxidase imqH carry out the three-step transformation of L-tyrosine into tetrahydroisoquinoline. Importantly, this sequence requires the presence of a free amine in the tyrosine moiety, indicating that isoquinoline formation occurs prior to peptide bond formation. The imidazolidin-4-one ring of imizoquins could form following additional oxidation of the methyl-derived bridgehead carbon by imqH. Lastly, O-methylation by imqG and leucine hydroxylation by imqE complete biosynthesis of the imizoquins. The sequence is that of Nonribosomal peptide synthetase imqB from Aspergillus flavus (strain ATCC 200026 / FGSC A1120 / IAM 13836 / NRRL 3357 / JCM 12722 / SRRC 167).